Consider the following 471-residue polypeptide: Metalloprotease TIKI homolog (471 aa).

The signal sequence occupies residues 1–24 (MAAFTLWILVLNVFLLGFQARKLA). The Extracellular portion of the chain corresponds to 25–449 (SNLKFPIQKC…SRKAAASCTP (425 aa)). Asparagine 226, asparagine 235, asparagine 284, and asparagine 342 each carry an N-linked (GlcNAc...) asparagine glycan. Basic residues predominate over residues 369–402 (KAKKSLNTRRERRKGCRGRRKKSKRCQKKKKRKR). Residues 369-406 (KAKKSLNTRRERRKGCRGRRKKSKRCQKKKKRKRPDYS) form a disordered region. The helical transmembrane segment at 450-470 (IWTVSLALTCAVTCLLTYSGF) threads the bilayer. A topological domain (cytoplasmic) is located at residue arginine 471.

The protein belongs to the TIKI family. Mn(2+) serves as cofactor. The cofactor is Co(2+).

The protein localises to the membrane. Metalloprotease. This Nematostella vectensis (Starlet sea anemone) protein is Metalloprotease TIKI homolog.